A 1371-amino-acid chain; its full sequence is uncharacterized protein (1371 aa).

The disordered stretch occupies residues 1020–1048 (WYLSSSKNTPEPRPDPEPTPEGHDNNLRP). A compositionally biased stretch (basic and acidic residues) spans 1029–1046 (PEPRPDPEPTPEGHDNNL). Residues 1083 to 1371 (GEPKATSMWM…SAMLGVKYTF (289 aa)) form the Autotransporter domain.

Its subcellular location is the cell outer membrane. This is an uncharacterized protein from Escherichia coli (strain K12).